We begin with the raw amino-acid sequence, 3163 residues long: MAAVTFASAITNAITNKTTSTGMVQFGSFPPMPLRSTTVTTVATPVGQPKLYTVRFGSLDPVIVKGGAGSLAKATRQQPSVEIDVSLSEAAALEVAKPKSSAVLRMHEEANKERALFLDWEASLKRRSYGIAENEKVVMTTRGVSKIVPRSSRAMKQKRARERRRAQQPIILKWEPKLSGFSIGGGFSASAIEAEEVRTKWPLHKTPSMKKRMVHKTCKMSDQGVDMLIRSLVKIFKAKSANIEYIGKKPIKVDFIRKERTKFARIQVAHLLGKRAQRDLLAGMEENHFIDILSEYSGNGTTINPGVVCAGWSGIVVRNETLTQKRSRSPSKAFVIRGEHEDKLYDARIKITKTMSLKIVHFSARGANFWKGFDRCFLAYRSDNREHTCYSGLDVTECGEVAALMCLAMFPCGKITCPDCVIDSELSQGQASGPSMKHRLTQLRDVIKSSYPRFKHAVQILDRYEQSLSSANENYQDFAEIQSISDGVEKAAFPHVNKLNAILIKGATATGEEFSQATKHLLEIARYLKNRTENIEKGSLKSFRNKVSQKAHINPTLMCDNQLDKNGNFIWGERGYHAKRFFSNYFEIIDPKKGYTQYETRVVPNGSRKLAIGKLIVPTNFEVLREQMRGEPVEPYPVTVECVSKSQGDFVHACCCVTTESGDPVLSEIKMPTKHHLVIGNSGDPKYIDLPEIEENKMYIAKEGYCYINIFLAMLVNVKESQAKEFTKVVRDKLVSELGKWPTLLDVATACYFLKVFYPDVANAELPRMLVDHKTKIIHVVDSYGSLSTGYHVLKTNTVEQLIKFTRCNLESSLKHYRVGGTEWENAHGADNIDNPQWCIKRLVKGVYRPKQLKEDMLANPFLPLYALLSPGVILAFYNSGSLEHLMNHYISADSNVAVLLVVLKSLAKKVSTSQSVLAQLQIIERSLPELIEAKANINGPDDAATRACNRFMGMLLHMAEPNYELANGGYTFLRDHSISILEKSYLQILDEAWNELSWSERCVIRYYPSKQAIFTQKDLPMQSEADLGGRYSESVISSYEWSKQQAKGVKDSVVNKLRSSMSWTSSKVSNSVCRTINYLVPDVFKFMNVLVCISLLIKMTAEANHIITTQRRLKLDIEETERKKIEWELAFHHNILTHSASQHPTLDEFTAYIAEKAPHLSEHIEPEEKEVVHQAKRQSEQELERVIAFVALVLMMFDAERSDCVTKILNKLKGLVATVEPTVYHQTLNEIEDDLNERNLFVDFELSSDSEMLQQLPAEKTFASWWSHQLSRGFTIPHYRTEGKFMTFTRATATEVAGKIAHESDKDILLMGAVGSGKSTGLPYHLSRKGNVLLLEPTRPLAENVHKQLSQAPFHQNTTLRMRGLTAFGSAPISVMTSGFALNYFANNRSRIEEFDFVIFDECHVHDANAMAMRCLIHECDYSGKIIKVSATPPGREVEFSTQYPVSISTEDTLSFQDFVNAQGSGSNCDVISKGDNILVYVASYNEVDTLSKLLIERDFKVTKVDGRTMKVGNIEITTSGTPSRKHFIVATNIIENGVTLDIDVVADFGTKVLPYLDTDNRMLSTTKTSINYGERIQRLGRVGRHKPGHALRIGHTERGLSEVPSCIATEAALKCFTYGLPVITNNVSTSILGNVTVKQARTMSVFEITPFYTSQVVRYDGSMHPQVHALLKRFKLRDSEIVLTKLAIPNRGVNAGSQPVSMHDSVQMLKIGVTLRIPFMCRDIPEKLHLDMWDVVVKFKGDAGFGRLSSSASKVAYTLQTDVNSIQRTVTIIDTLIAEERRKQEYFKTVTSNCVSSSNFSLQSITNAIKSRMMKDHPCENISVLEGAKSQLLEFRNLNSDHSFVTKTDGISRSFMRDYGALEAVNHQSTNEMSKFLQLKGKWNKTLITRDVLVICGVLGGGVWMVVQHFRSKVSEPVTHEAKGKKQRQKLKFRNARDNKMGREVYGDDDTIEHFFGDAYTKKGKSKGRTRGIGHKNRKFINMYGFDPEDFSAVRFVDPLTGATLDDNPFTDITLVQKHFGDIRMDLLGEDELDSNEIRMNKTIQAYYMNNKTGKALKVDLTPHIPLKVCDLHATIAGFPERENELRQTGKAQPINIDEVPRANNELVPVDHESNSMFRGLRDYNPISNNICHLTNVSDGASNSLYGVGFGPLILTNRHLFERNNGELIIKSRHGEFVIKNTTQLHLLPIPDRDLLLIRLPKDVPPFPQKLGFRQPEKGERICMVGSNFQTKSITSIVSETSTIMPVENSQFWKHWISTKDGQCGSPMVSTKDGKILGLHSLANFQNSINYFAAFPDDFTEKYLHTIEAHEWVKHWKYNTSAISWGSLNIQASQPVSLFKVSKLISDLDSTAVYAQTQQNRWMFEQLTGNLKAIAHCPSQLVTKHTVKGKCQMFDLYLKLHDEAREYFQPMLGQYQKSKLNREAYAKDLLKYATPIEAGNIDCDLFEKTVEIVISDLRGYGFETCNYVTDENDIFEALNMKSAVGALYKGKKKDYFAEFTPEVKEEILKQSCERLFLGKMGVWNGSLKAELRPLEKVEANKTRTFTAAPLDTLLGGKVCVDDFNNQFYDHNLRAPWDVGMTKFYCGWDRLLESLPDGWVYCDADGSQFDSSLSPYLINAVLNIRLGFMEEWDVGEVMLRNLYTEIVYTPISTPDGTLVKKFKGNNSGQPSTVVDNTLMVILAVNYSLKKGGIPSELRDSIIRFFVNGDDLLLSVHPEYEYILDTMADNFRELGLKYTFDSRTREKGDLWFMSHQGHRREGIWIPKLEPERIVSILEWDRSKEPCHRLEAICAAMIESWGYDKLTHEIRKFYAWMIEQAPFSSLAQEGKAPYIAETALRKLYLDKEPAQEDLTQYLQAIFEDYEDGVEACVYHQAGETLDADLTEEQKQAEKEKKEREKAEKERERQKQLAFKKGKDVAQEEGKRDKEVNAGTSGTFSVPRLKSLTSKMRVPRYEKRVALNLDHLILYTPEQTDLSNTRSTRKQFDTWFEGVMADYELTEDKMQIILNGLRVWCIENGTSPNINGMWVMMDGDDQVEFPIKPLIDHAKPTFRQIMAHFSDVAEAYIEKRNQDRPYMPRYGLQRNLTDMSLARYAFDFYEMTSRTPIRAREAHIQMKAAALRGANNNLFGLDGNVGTTVENTERHTTEDVNRNMHNLLGVQGL.

The Peptidase S30 domain maps to 219 to 362 (KMSDQGVDML…KTMSLKIVHF (144 aa)). Active-site for P1 proteinase activity residues include His270, Asp279, and Ser313. Positions 414 to 417 (KITC) match the Involved in interaction with stylet and aphid transmission motif. The Involved in virions binding and aphid transmission motif lies at 672 to 674 (PTK). The Peptidase C6 domain maps to 698–820 (MYIAKEGYCY…ESSLKHYRVG (123 aa)). Residues Cys706 and His779 each act as for helper component proteinase activity in the active site. The 153-residue stretch at 1300-1452 (KIAHESDKDI…TQYPVSISTE (153 aa)) folds into the Helicase ATP-binding domain. 1313–1320 (GAVGSGKS) is an ATP binding site. The DEAH box signature appears at 1402 to 1405 (DECH). The 160-residue stretch at 1471–1630 (DVISKGDNIL…GLPVITNNVS (160 aa)) folds into the Helicase C-terminal domain. The Cytoplasmic portion of the chain corresponds to 1871 to 1888 (STNEMSKFLQLKGKWNKT). A helical membrane pass occupies residues 1889–1909 (LITRDVLVICGVLGGGVWMVV). Topologically, residues 1910–1923 (QHFRSKVSEPVTHE) are lumenal. The Nuclear localization signal signature appears at 1964 to 1971 (KKGKSKGR). Residues 1983-2017 (INMYGFDPEDFSAVRFVDPLTGATLDDNPFTDITL) form a binding to host eIF(iso)4E region. At Tyr1986 the chain carries O-(5'-phospho-RNA)-tyrosine. The region spanning 2116 to 2334 (SNSMFRGLRD…ISWGSLNIQA (219 aa)) is the Peptidase C4 domain. Residues His2161, Asp2196, and Cys2266 each act as for nuclear inclusion protein A activity in the active site. Residues 2600 to 2724 (WVYCDADGSQ…SVHPEYEYIL (125 aa)) form the RdRp catalytic domain. The segment at 2883–2934 (DLTEEQKQAEKEKKEREKAEKERERQKQLAFKKGKDVAQEEGKRDKEVNAGT) is disordered. Residues 2886–2930 (EEQKQAEKEKKEREKAEKERERQKQLAFKKGKDVAQEEGKRDKEV) show a composition bias toward basic and acidic residues.

It belongs to the potyviridae genome polyprotein family. Interacts with host eIF4E protein (via cap-binding region); this interaction mediates the translation of the VPg-viral RNA conjugates. Part of a complex that comprises VPg, RNA, host EIF4E and EIF4G; this interaction mediates the translation of the VPg-viral RNA conjugates. In terms of assembly, interacts, via N-terminal region, with host Sec24a protein in COPII-coated vesicles. This binding triggers the formation of host endoplasmic reticulum (ER)-derived viral vesicles involved in cell-to-cell viral movement. In terms of processing, VPg is uridylylated by the polymerase and is covalently attached to the 5'-end of the genomic RNA. This uridylylated form acts as a nucleotide-peptide primer for the polymerase. Potyviral RNA is expressed as two polyproteins which undergo post-translational proteolytic processing. Genome polyprotein is processed by NIa-pro, P1 and HC-pro proteinases resulting in the production of at least ten individual proteins. P3N-PIPO polyprotein is cleaved by P1 and HC-pro proteinases resulting in the production of three individual proteins. The P1 proteinase and the HC-pro cleave only their respective C-termini autocatalytically. 6K1 is essential for proper proteolytic separation of P3 from CI.

It localises to the host cytoplasm. Its subcellular location is the host nucleus. The protein localises to the host cytoplasmic vesicle. The protein resides in the host membrane. It is found in the virion. The catalysed reaction is RNA(n) + a ribonucleoside 5'-triphosphate = RNA(n+1) + diphosphate. It catalyses the reaction Hydrolyzes glutaminyl bonds, and activity is further restricted by preferences for the amino acids in P6 - P1' that vary with the species of potyvirus, e.g. Glu-Xaa-Xaa-Tyr-Xaa-Gln-|-(Ser or Gly) for the enzyme from tobacco etch virus. The natural substrate is the viral polyprotein, but other proteins and oligopeptides containing the appropriate consensus sequence are also cleaved.. It carries out the reaction Hydrolyzes a Gly-|-Gly bond at its own C-terminus, commonly in the sequence -Tyr-Xaa-Val-Gly-|-Gly, in the processing of the potyviral polyprotein.. Functionally, cysteine protease that cleaves a Gly-Gly dipeptide at its own C-terminus. Required for aphid transmission and also has proteolytic activity. Interacts with virions and aphid stylets. Acts as a suppressor of RNA-mediated gene silencing, also known as post-transcriptional gene silencing (PTGS), a mechanism of plant viral defense that limits the accumulation of viral RNAs. May have RNA-binding activity. In terms of biological role, has helicase activity. It may be involved in replication. Indispensable for virus replication. Its function is as follows. Responsible for the formation of peripheral motile host endoplasmic reticulum (ER)-derived viral vesicles called 'viral factories', seat of the viral RNA (vRNA) replication and carrying vRNA to plasmodesmata for delivery into adjacent non-infected cells; this process relies on host Sec24a-binding. Functionally, mediates the cap-independent, EIF4E-dependent translation of viral genomic RNAs. Binds to the cap-binding site of host EIF4E and thus interferes with the host EIF4E-dependent mRNA export and translation. VPg-RNA directly binds EIF4E and is a template for transcription. Also forms trimeric complexes with EIF4E-EIF4G, which are templates for translation. In terms of biological role, has RNA-binding and proteolytic activities. RNA-dependent RNA polymerase that ensures transcription and replication of viral RNA (vRNA). Its function is as follows. Involved in aphid transmission, cell-to-cell and systemis movement, encapsidation of the viral RNA and in the regulation of viral RNA amplification. In Brassica (TuMV), this protein is Genome polyprotein.